Here is a 557-residue protein sequence, read N- to C-terminus: Low affinity inorganic phosphate transporter 8 (557 aa).

Residues 1–20 (MATSHGVLRSLDNAKTQSYH) lie on the Cytoplasmic side of the membrane. The helical transmembrane segment at 21-41 (YLAIVIAGMGFFTDAYDLFCI) threads the bilayer. Residues 42-70 (TAVTKLIGRLYYSDPTNHSPGILPTNVNN) are Extracellular-facing. The helical transmembrane segment at 71–91 (AITGVALCGTLAGQLFFGWLG) threads the bilayer. Residues 92–98 (DKLGRKK) are Cytoplasmic-facing. Residues 99–119 (VYGITLTTMVGFALLSGLSFG) traverse the membrane as a helical segment. The Extracellular portion of the chain corresponds to 120-130 (STPKTVVTSLC). A helical transmembrane segment spans residues 131–151 (FFRFWLGFGIGGDYPLSAVIM). Residues 152 to 162 (SEYANQKTRGS) lie on the Cytoplasmic side of the membrane. The chain crosses the membrane as a helical span at residues 163–183 (FIAAVFAMQGVGILVAGGVAM). Over 184–210 (FVSKLFLLYFPAPDFETDAVLSTQPEG) the chain is Extracellular. The helical transmembrane segment at 211–231 (DFVWRIVLMFGAVPAALTYYW) threads the bilayer. Residues 232–294 (RMKMPETARY…LFSSEFLNRH (63 aa)) lie on the Cytoplasmic side of the membrane. A helical transmembrane segment spans residues 295-315 (GLHLLGTTSTWFLLDIAFYSL). Over 316 to 346 (QLTQKDIYPTSGLVYKASKMNAIEEVFQLSR) the chain is Extracellular. Residues 347–367 (AMFAVALIATVPGYWCTVFLI) form a helical membrane-spanning segment. Topologically, residues 368-369 (EK) are cytoplasmic. A helical transmembrane segment spans residues 370 to 390 (IGRFRIQLIGFLVMSVCMWFL). Topologically, residues 391 to 414 (GHNYRSFRGEESACKNGSKYSFCN) are extracellular. Residue Asn-406 is glycosylated (N-linked (GlcNAc...) asparagine). A helical membrane pass occupies residues 415–435 (GNPVMFAILFGLTLFFANFGP). Residues 436–457 (NSTTFIVPAELFPARLRSTCHG) are Cytoplasmic-facing. The chain crosses the membrane as a helical span at residues 458–478 (ISAAAGKSGAIVGAFGVQSYI). Over 479-490 (GNSHDKSKGTKQ) the chain is Extracellular. A helical transmembrane segment spans residues 491 to 511 (AIMALAVVNLLGFFFTFLVPE). Residues 512-557 (TQGRSLEEISGEEKDFQGNNADEEISGERNGTRNASVDKSPETSMV) are Cytoplasmic-facing. The disordered stretch occupies residues 519 to 557 (EISGEEKDFQGNNADEEISGERNGTRNASVDKSPETSMV). The segment covering 543-557 (TRNASVDKSPETSMV) has biased composition (polar residues).

Belongs to the major facilitator superfamily. Phosphate:H(+) symporter (TC 2.A.1.9) family.

It localises to the cell membrane. It carries out the reaction phosphate(in) + H(+)(in) = phosphate(out) + H(+)(out). In terms of biological role, low-affinity transporter for external inorganic phosphate (Pi) that may be involved in the acquisition of phosphate released by arbuscular mycorrhizal (AM) fungi (e.g. Glomus versiforme and G.intraradices) during AM symbiosis; not required for mycorrhizal arbuscule development. The protein is Low affinity inorganic phosphate transporter 8 of Medicago truncatula (Barrel medic).